Here is a 186-residue protein sequence, read N- to C-terminus: Ribosome-recycling factor (186 aa).

Belongs to the RRF family.

It is found in the cytoplasm. Functionally, responsible for the release of ribosomes from messenger RNA at the termination of protein biosynthesis. May increase the efficiency of translation by recycling ribosomes from one round of translation to another. In Chlorobium phaeobacteroides (strain BS1), this protein is Ribosome-recycling factor.